The chain runs to 147 residues: Small ribosomal subunit protein uS12 (147 aa).

The protein belongs to the universal ribosomal protein uS12 family. In terms of assembly, part of the 30S ribosomal subunit.

With S4 and S5 plays an important role in translational accuracy. Located at the interface of the 30S and 50S subunits. The sequence is that of Small ribosomal subunit protein uS12 from Pyrobaculum calidifontis (strain DSM 21063 / JCM 11548 / VA1).